The sequence spans 335 residues: NmrA-like family domain-containing oxidoreductase ptmS (335 aa).

NADP(+) is bound by residues 12–17, 39–43, 60–61, 81–88, lysine 139, and 163–166; these read GATGNQ, RDPNS, DG, INSDDPVF, and FLEN. The tract at residues 161–206 is interaction with ASS1; the sequence is GYFLENFLFKQGAFIMGGFPWETDAEGYLTWKVPYWGGEEQIPFLS.

The protein belongs to the NmrA-type oxidoreductase family.

It participates in secondary metabolite biosynthesis. Functionally, nmrA-like family domain-containing oxidoreductase; part of the gene cluster that mediates the biosynthesis of the indole diterpenes penitrems. The geranylgeranyl diphosphate (GGPP) synthase ptmG catalyzes the first step in penitrem biosynthesis via conversion of farnesyl pyrophosphate and isopentyl pyrophosphate into geranylgeranyl pyrophosphate (GGPP). Condensation of indole-3-glycerol phosphate with GGPP by the prenyl transferase ptmC then forms 3-geranylgeranylindole (3-GGI). Epoxidation by the FAD-dependent monooxygenase ptmM leads to a epoxidized-GGI that is substrate of the terpene cyclase ptmB for cyclization to yield paspaline. Paspaline is subsequently converted to 13-desoxypaxilline by the cytochrome P450 monooxygenase ptmP, the latter being then converted to paxilline by the cytochrome P450 monooxygenase ptmQ. Paxilline is converted to beta-paxitriol via C-10 ketoreduction by the short-chain dehydrogenase ptmH which can be monoprenylated at the C-20 by the indole diterpene prenyltransferase ptmD. A two-step elimination (acetylation and elimination) process performed by the O-acetyltransferase ptmV and ptmI leads to the production of the prenylated form of penijanthine. The FAD-linked oxidoreductase ptmO then converts the prenylated form of penijanthine into PC-M5 which is in turn transformed into PC-M4 by the aromatic dimethylallyltransferase ptmE. Five sequential oxidative transformations performed by the cytochrome P450 monooxygenases ptmK, ptmU, ptmL, ptmN and ptmJ yield the various penitrem compounds. PtmK, ptmU and ptmM are involved in the formation of the key bicyclic ring of penitrem C via the formation of the intermediates secopenitrem D and penitrem D. PtmL catalyzes the epoxidation of penitrem D and C to yield penitrem B and F, respectively. PtmJ catalyzes the last benzylic hydroxylation to convert penitrem B to prenitrem E and penitrem F to penitrem A. In Penicillium ochrochloron, this protein is NmrA-like family domain-containing oxidoreductase ptmS.